Consider the following 200-residue polypeptide: Ras-related protein RHN1 (200 aa).

GTP is bound by residues 17 to 25, 36 to 42, 65 to 69, 123 to 126, and 153 to 155; these read GDMGAGKSS, LEFQEST, DTAGQ, NKAD, and SAK. An Effector region motif is present at residues 39 to 47; it reads QESTIGAAF. Residues Cys198 and Cys199 are each lipidated (S-geranylgeranyl cysteine).

Belongs to the small GTPase superfamily. Rab family. High in stem, root, and inflorescence.

It is found in the cell membrane. Protein transport. Probably involved in vesicular traffic. This Nicotiana plumbaginifolia (Leadwort-leaved tobacco) protein is Ras-related protein RHN1 (RHN1).